An 89-amino-acid polypeptide reads, in one-letter code: Small ribosomal subunit protein uS14A (89 aa).

Belongs to the universal ribosomal protein uS14 family. In terms of assembly, part of the 30S ribosomal subunit. Contacts proteins S3 and S10.

In terms of biological role, binds 16S rRNA, required for the assembly of 30S particles and may also be responsible for determining the conformation of the 16S rRNA at the A site. The protein is Small ribosomal subunit protein uS14A of Bacillus pumilus (strain SAFR-032).